A 270-amino-acid chain; its full sequence is 3-phenylpropionate-dihydrodiol/cinnamic acid-dihydrodiol dehydrogenase (270 aa).

10–34 (FITGGGSGLGLALVERFIEEGAQVA) lines the NAD(+) pocket. Ser-143 is a substrate binding site. Tyr-156 functions as the Proton acceptor in the catalytic mechanism.

It belongs to the short-chain dehydrogenases/reductases (SDR) family.

The catalysed reaction is 3-(cis-5,6-dihydroxycyclohexa-1,3-dien-1-yl)propanoate + NAD(+) = 3-(2,3-dihydroxyphenyl)propanoate + NADH + H(+). The enzyme catalyses (2E)-3-(cis-5,6-dihydroxycyclohexa-1,3-dien-1-yl)prop-2-enoate + NAD(+) = (2E)-3-(2,3-dihydroxyphenyl)prop-2-enoate + NADH + H(+). Its pathway is aromatic compound metabolism; 3-phenylpropanoate degradation. Functionally, converts 3-phenylpropionate-dihydrodiol (PP-dihydrodiol) and cinnamic acid-dihydrodiol (CI-dihydrodiol) into 3-(2,3-dihydroxylphenyl)propanoic acid (DHPP) and 2,3-dihydroxicinnamic acid (DHCI), respectively. The polypeptide is 3-phenylpropionate-dihydrodiol/cinnamic acid-dihydrodiol dehydrogenase (Escherichia coli O8 (strain IAI1)).